The chain runs to 464 residues: Opioid growth factor receptor-like protein 1 (464 aa).

2 disordered regions span residues M1–K91 and E309–G464. A compositionally biased stretch (basic and acidic residues) spans Q43–G59. The span at A74 to G86 shows a compositional bias: low complexity. The span at P316–K325 shows a compositional bias: basic and acidic residues. The span at Q327–S342 shows a compositional bias: polar residues. Composition is skewed to basic and acidic residues over residues S363–S382, P390–A400, and S425–E439. Over residues A452–G464 the composition is skewed to polar residues.

It belongs to the opioid growth factor receptor family.

The chain is Opioid growth factor receptor-like protein 1 (Ogfrl1) from Mus musculus (Mouse).